A 415-amino-acid chain; its full sequence is Fructose-1,6-bisphosphatase, chloroplastic (415 aa).

The transit peptide at 1–57 (MASIGPATTTAVKLRSSIFNPQSSTLSPSQQCITFTKSLHSFPTATRHNVASGVRCM) directs the protein to the chloroplast. Mg(2+)-binding residues include glutamate 135, glutamate 164, aspartate 185, leucine 187, and aspartate 188. Substrate is bound at residue 188–191 (DGSS). The interval 207–232 (SPNDECIVDSDHDDESQLSAEEQRCV) is involved in light regulation. Cysteine 231 and cysteine 236 are oxidised to a cystine. Substrate is bound by residues asparagine 295, tyrosine 327, tyrosine 345, tyrosine 347, and lysine 357. Residue glutamate 363 participates in Mg(2+) binding.

Belongs to the FBPase class 1 family. As to quaternary structure, homotetramer. Mg(2+) serves as cofactor.

It is found in the plastid. The protein localises to the chloroplast. It carries out the reaction beta-D-fructose 1,6-bisphosphate + H2O = beta-D-fructose 6-phosphate + phosphate. It participates in carbohydrate biosynthesis; Calvin cycle. This Spinacia oleracea (Spinach) protein is Fructose-1,6-bisphosphatase, chloroplastic.